We begin with the raw amino-acid sequence, 190 residues long: Guanylate kinase (190 aa).

Residues 8–188 enclose the Guanylate kinase-like domain; it reads GRLVILAGPS…AVKAIEDVLL (181 aa). 15 to 22 is a binding site for ATP; that stretch reads GPSAVGKS.

This sequence belongs to the guanylate kinase family.

It localises to the cytoplasm. The enzyme catalyses GMP + ATP = GDP + ADP. Functionally, essential for recycling GMP and indirectly, cGMP. The chain is Guanylate kinase from Corynebacterium glutamicum (strain ATCC 13032 / DSM 20300 / JCM 1318 / BCRC 11384 / CCUG 27702 / LMG 3730 / NBRC 12168 / NCIMB 10025 / NRRL B-2784 / 534).